The chain runs to 83 residues: Beta-toxin Ct7 (83 aa).

A signal peptide spans 1–18; it reads MKVLILIIASVLLIGVEC. Residues 19–81 form the LCN-type CS-alpha/beta domain; that stretch reads KDGYPMNSEG…VWDSATNKCG (63 aa). 4 cysteine pairs are disulfide-bonded: Cys-29–Cys-80, Cys-33–Cys-54, Cys-40–Cys-61, and Cys-44–Cys-63. The residue at position 81 (Gly-81) is a Glycine amide. A propeptide is located at residue Gly-82.

The protein belongs to the long (4 C-C) scorpion toxin superfamily. Sodium channel inhibitor family. Beta subfamily. Expressed by the venom gland.

The protein resides in the secreted. Beta toxins bind voltage-independently at site-4 of sodium channels (Nav) and shift the voltage of activation toward more negative potentials thereby affecting sodium channel activation and promoting spontaneous and repetitive firing. Is possibly toxic to mice, freshwater shrimp and crickets. In Centruroides tecomanus (Scorpion), this protein is Beta-toxin Ct7.